Reading from the N-terminus, the 1323-residue chain is Alpha-factor-transporting ATPase (1323 aa).

The segment covering 1–10 (MFQEKSEKSS) has biased composition (basic and acidic residues). Residues 1 to 23 (MFQEKSEKSSFPKRSSSLRSPSD) form a disordered region. The span at 12–23 (PKRSSSLRSPSD) shows a compositional bias: low complexity. N37 is a glycosylation site (N-linked (GlcNAc...) asparagine). Residues 42–62 (WPLILVGILLMGGSAIATLMN) traverse the membrane as a helical segment. The ABC transmembrane type-1 1 domain maps to 45–337 (ILVGILLMGG…ITELLAILNT (293 aa)). N83 is a glycosylation site (N-linked (GlcNAc...) asparagine). A helical transmembrane segment spans residues 93-113 (LCVGLIGIGCCKMILVWLGMF). N-linked (GlcNAc...) asparagine glycosylation is present at N136. Transmembrane regions (helical) follow at residues 169–189 (ILAS…MSFY), 192–212 (WSTT…GWYF), 281–301 (VLKT…NYLL), and 315–335 (FSSC…LAIL). One can recognise an ABC transporter 1 domain in the interval 373-609 (IYFKNVWFES…EIVQNYKSQG (237 aa)). Residue 408-415 (GKSGSGKS) participates in ATP binding. A glycan (N-linked (GlcNAc...) asparagine) is linked at N450. A helical membrane pass occupies residues 677–697 (LLGFGILLAIFQGVSSPVFSY). Residues 678–969 (LGFGILLAIF…LIHQLPEITR (292 aa)) form the ABC transmembrane type-1 2 domain. N714 carries N-linked (GlcNAc...) asparagine glycosylation. Residues 724–744 (CISLSIAIFTGVTSYLSEFIL) form a helical membrane-spanning segment. N-linked (GlcNAc...) asparagine glycans are attached at residues N777 and N789. Helical transmembrane passes span 801 to 821 (FFPL…WSIV), 828 to 848 (LVGI…GKIL), and 909 to 929 (IGFA…LFYG). N939 carries N-linked (GlcNAc...) asparagine glycosylation. The chain crosses the membrane as a helical span at residues 941-961 (SQLLQVITLLSFTISNASILI). N-linked (GlcNAc...) asparagine glycans are attached at residues N991, N1030, and N1039. One can recognise an ABC transporter 2 domain in the interval 1035-1321 (ISFNNVSFSY…DGEFTKITKT (287 aa)). Residue 1071 to 1078 (GQSGSGKS) coordinates ATP. An N-linked (GlcNAc...) asparagine glycan is attached at N1097. Residues 1120-1140 (GLLCQTIAIVPQFPKFFSGTI) form a helical membrane-spanning segment. N-linked (GlcNAc...) asparagine glycosylation is found at N1143, N1149, and N1157. A helical membrane pass occupies residues 1170–1190 (ILKLVNLHQFIVSLPQGLLTI). N1192 carries N-linked (GlcNAc...) asparagine glycosylation. The span at 1194–1208 (SDNDNDNGNENENEN) shows a compositional bias: acidic residues. Residues 1194–1217 (SDNDNDNGNENENENENGNTISTS) are disordered.

Belongs to the ABC transporter superfamily. Alpha-factor sex pheromone exporter (TC 3.A.1.206) family.

The protein resides in the membrane. It catalyses the reaction an [alpha-factor](in) + ATP + H2O = an [alpha-factor](out) + ADP + phosphate + H(+). This chain is Alpha-factor-transporting ATPase (HST6), found in Candida albicans (strain WO-1) (Yeast).